The primary structure comprises 267 residues: MRRGDPPPRAFQAPVDVHASADGQVYMFRHRQEEPEASSEDEELNVMELRPRSRDSSSKEKEGVGEMLLLERDISHEDNLSKLALQYGCKVADIKRVNNLFQEQDMYALKSIKIPVRKHGLLTEAISELRTPQQRPSHDAAPSNSAMASVSGRPQVQEYTNYLKEVDNDIERLIQNTDNVEEVFSASSRVSRGWGWRSQRLRSNGADWGIQWWNAVIAMLLIGIVLPIFYVVYYKTKDSGESAVDNVGVNISVSTSNSTREYNGKSP.

The Extracellular segment spans residues methionine 1 to glutamine 211. The tract at residues histidine 30–valine 64 is disordered. The segment covering proline 35–asparagine 45 has biased composition (acidic residues). Positions leucine 49–valine 64 are enriched in basic and acidic residues. In terms of domain architecture, LysM spans leucine 70–isoleucine 114. An N-linked (GlcNAc...) asparagine glycan is attached at asparagine 79. The tract at residues arginine 130–glycine 152 is disordered. Over residues proline 142–glycine 152 the composition is skewed to polar residues. The chain crosses the membrane as a helical span at residues tryptophan 212–valine 232. Residues tyrosine 233–proline 267 are Cytoplasmic-facing.

Its subcellular location is the membrane. This Danio rerio (Zebrafish) protein is LysM and putative peptidoglycan-binding domain-containing protein 4 (lysmd4).